Here is a 503-residue protein sequence, read N- to C-terminus: MTDKKYIVALDQGTTSSRAVVMDHDANIVSVSQREFEQIYPKPGWVEHDPMEIWASQSSTLVEALAKADINSDQIAAIGITNQRETVVVWERETGKPIYNAIVWQCRRTAEICEQLKRDGMEEYIRKATGLVVDPYFSGTKVKWILDHVEGSRERAKRGELLFGTVDTWLIWKMTQGRVHVTDYTNASRTMLFNIHELDWDDKMLDALDIPRAMLPEVRKSSEVYGQTNIGGKGGTRIPIAGIAGDQQAALFGQLCVKEGMAKNTYGTGCFMLMNTGEKAVTSTHGLLTTIACGPRGEVNYALEGAVFMAGASIQWLRDEMKLISDAFDSEYFATKVKDTNGVYVVPAFTGLGAPYWDPYARGAIFGLTRGVNSNHIIRATLESIAYQTRDVLEAMQADSGIRLHALRVDGGAVANNFLMQFQSDILGTRVERPEVREVTALGAAYLAGLAVGFWQNLDELQEKAVIEREFRPGIETTERNYRYSGWKKAVKRALAWEEHDEA.

Thr14 is an ADP binding site. ATP-binding residues include Thr14, Thr15, and Ser16. Thr14 is a sn-glycerol 3-phosphate binding site. Arg18 contributes to the ADP binding site. Sn-glycerol 3-phosphate-binding residues include Arg84, Glu85, Tyr136, and Asp246. Glycerol-binding residues include Arg84, Glu85, Tyr136, Asp246, and Gln247. The ADP site is built by Thr268 and Gly311. 4 residues coordinate ATP: Thr268, Gly311, Gln315, and Gly412. 2 residues coordinate ADP: Gly412 and Asn416.

The protein belongs to the FGGY kinase family. In terms of assembly, homotetramer and homodimer (in equilibrium). Heterodimer with EIIA-Glc. Binds 1 zinc ion per glycerol kinase EIIA-Glc dimer. The zinc ion is important for dimerization.

The enzyme catalyses glycerol + ATP = sn-glycerol 3-phosphate + ADP + H(+). Its pathway is polyol metabolism; glycerol degradation via glycerol kinase pathway; sn-glycerol 3-phosphate from glycerol: step 1/1. Activity of this regulatory enzyme is affected by several metabolites. Allosterically and non-competitively inhibited by fructose 1,6-bisphosphate (FBP) and unphosphorylated phosphocarrier protein EIIA-Glc (III-Glc), an integral component of the bacterial phosphotransferase (PTS) system. Key enzyme in the regulation of glycerol uptake and metabolism. Catalyzes the phosphorylation of glycerol to yield sn-glycerol 3-phosphate. The polypeptide is Glycerol kinase (Klebsiella pneumoniae (strain 342)).